The primary structure comprises 132 residues: Small ribosomal subunit protein uS8 (132 aa).

It belongs to the universal ribosomal protein uS8 family. As to quaternary structure, part of the 30S ribosomal subunit. Contacts proteins S5 and S12.

In terms of biological role, one of the primary rRNA binding proteins, it binds directly to 16S rRNA central domain where it helps coordinate assembly of the platform of the 30S subunit. This chain is Small ribosomal subunit protein uS8, found in Sinorhizobium medicae (strain WSM419) (Ensifer medicae).